The sequence spans 110 residues: PHD finger-like domain-containing protein 5B (110 aa).

The protein belongs to the PHF5 family.

The polypeptide is PHD finger-like domain-containing protein 5B (Arabidopsis thaliana (Mouse-ear cress)).